We begin with the raw amino-acid sequence, 316 residues long: Small ribosomal subunit biogenesis GTPase RsgA (316 aa).

Residues 1–20 are disordered; that stretch reads MSKLSHQQQRRIHNHRQNKL. A compositionally biased stretch (basic residues) spans 8–18; it reads QQRRIHNHRQN. The region spanning 92-251 is the CP-type G domain; the sequence is AGKLKPVASN…IIDTPGVRGF (160 aa). Residues 139–142 and 193–201 each bind GTP; these read NKSD and GQSGVGKSS. Residues Cys275, Cys280, His282, and Cys288 each coordinate Zn(2+).

It belongs to the TRAFAC class YlqF/YawG GTPase family. RsgA subfamily. As to quaternary structure, monomer. Associates with 30S ribosomal subunit, binds 16S rRNA. Zn(2+) serves as cofactor.

Its subcellular location is the cytoplasm. In terms of biological role, one of several proteins that assist in the late maturation steps of the functional core of the 30S ribosomal subunit. Helps release RbfA from mature subunits. May play a role in the assembly of ribosomal proteins into the subunit. Circularly permuted GTPase that catalyzes slow GTP hydrolysis, GTPase activity is stimulated by the 30S ribosomal subunit. This chain is Small ribosomal subunit biogenesis GTPase RsgA, found in Dichelobacter nodosus (strain VCS1703A).